Here is a 177-residue protein sequence, read N- to C-terminus: Nucleoside triphosphate/diphosphate phosphatase (177 aa).

Catalysis depends on arginine 23, which acts as the Proton donor. Positions 87, 103, 105, 107, 120, and 123 each coordinate Mg(2+).

The protein belongs to the Ntdp family. Mg(2+) serves as cofactor.

The enzyme catalyses a ribonucleoside 5'-triphosphate + H2O = a ribonucleoside 5'-diphosphate + phosphate + H(+). It catalyses the reaction a ribonucleoside 5'-diphosphate + H2O = a ribonucleoside 5'-phosphate + phosphate + H(+). Functionally, has nucleoside phosphatase activity towards nucleoside triphosphates and nucleoside diphosphates. The protein is Nucleoside triphosphate/diphosphate phosphatase of Streptococcus gordonii (strain Challis / ATCC 35105 / BCRC 15272 / CH1 / DL1 / V288).